The primary structure comprises 393 residues: Pyrimidine monooxygenase RutA (393 aa).

FMN contacts are provided by residues 79–80, Asn145, Glu154, 170–171, and Ser220; these read IK and RY.

It belongs to the NtaA/SnaA/DszA monooxygenase family. RutA subfamily.

It carries out the reaction uracil + FMNH2 + NADH + O2 = (Z)-3-ureidoacrylate + FMN + NAD(+) + H2O + H(+). The enzyme catalyses thymine + FMNH2 + NADH + O2 = (Z)-2-methylureidoacrylate + FMN + NAD(+) + H2O + H(+). Functionally, catalyzes the pyrimidine ring opening between N-3 and C-4 by an unusual flavin hydroperoxide-catalyzed mechanism, adding oxygen atoms in the process to yield ureidoacrylate peracid, that immediately reacts with FMN forming ureidoacrylate and FMN-N(5)-oxide. The FMN-N(5)-oxide reacts spontaneously with NADH to produce FMN. Requires the flavin reductase RutF to regenerate FMN in vivo. In Escherichia coli O139:H28 (strain E24377A / ETEC), this protein is Pyrimidine monooxygenase RutA.